A 449-amino-acid chain; its full sequence is Glutamate--tRNA ligase 2 (449 aa).

The 'HIGH' region motif lies at 17 to 27 (PSPTGFLHVGN). The 'KMSKS' region motif lies at 248–252 (ALSKR). ATP is bound at residue K251.

It belongs to the class-I aminoacyl-tRNA synthetase family. Glutamate--tRNA ligase type 1 subfamily. As to quaternary structure, monomer.

It localises to the cytoplasm. The enzyme catalyses tRNA(Glu) + L-glutamate + ATP = L-glutamyl-tRNA(Glu) + AMP + diphosphate. Catalyzes the attachment of glutamate to tRNA(Glu) in a two-step reaction: glutamate is first activated by ATP to form Glu-AMP and then transferred to the acceptor end of tRNA(Glu). This Jannaschia sp. (strain CCS1) protein is Glutamate--tRNA ligase 2.